Here is a 153-residue protein sequence, read N- to C-terminus: Nucleoside diphosphate kinase (153 aa).

Residue Ala-2 is modified to N-acetylalanine. Lys-13, Phe-61, Arg-89, Thr-95, Arg-106, and Asn-116 together coordinate ATP. His-119 acts as the Pros-phosphohistidine intermediate in catalysis. Ser-126 is modified (phosphoserine).

The protein belongs to the NDK family. As to quaternary structure, homohexamer. Mg(2+) is required as a cofactor.

It is found in the cytoplasm. The protein localises to the cytoskeleton. The catalysed reaction is a 2'-deoxyribonucleoside 5'-diphosphate + ATP = a 2'-deoxyribonucleoside 5'-triphosphate + ADP. It catalyses the reaction a ribonucleoside 5'-diphosphate + ATP = a ribonucleoside 5'-triphosphate + ADP. In terms of biological role, major role in the synthesis of nucleoside triphosphates other than ATP. The ATP gamma phosphate is transferred to the NDP beta phosphate via a ping-pong mechanism, using a phosphorylated active-site intermediate. This Drosophila melanogaster (Fruit fly) protein is Nucleoside diphosphate kinase (awd).